Reading from the N-terminus, the 469-residue chain is UDP-N-acetylmuramate--L-alanine ligase (469 aa).

118-124 (GTHGKTT) lines the ATP pocket.

This sequence belongs to the MurCDEF family.

Its subcellular location is the cytoplasm. It carries out the reaction UDP-N-acetyl-alpha-D-muramate + L-alanine + ATP = UDP-N-acetyl-alpha-D-muramoyl-L-alanine + ADP + phosphate + H(+). Its pathway is cell wall biogenesis; peptidoglycan biosynthesis. Functionally, cell wall formation. This is UDP-N-acetylmuramate--L-alanine ligase from Lachnoclostridium phytofermentans (strain ATCC 700394 / DSM 18823 / ISDg) (Clostridium phytofermentans).